The chain runs to 659 residues: Siderophore transporter fer7 (659 aa).

Positions 1 to 62 are disordered; it reads MSNQAQDQPE…ADASSAREGQ (62 aa). A compositionally biased stretch (polar residues) spans 31 to 41; sequence QSVSAHGNTSL. An N-linked (GlcNAc...) asparagine glycan is attached at asparagine 38. The span at 42 to 54 shows a compositional bias: basic and acidic residues; it reads NKKDRVSAVRDAD. 8 consecutive transmembrane segments (helical) span residues 79 to 99, 121 to 141, 150 to 170, 208 to 228, 245 to 265, 316 to 336, 348 to 368, and 379 to 399; these read NSPIVYTVYASLAAVTICFAL, LFGVIATVEAILNAVSKPFIA, QTAYFLVAVFYTIGFVVVASA, GVVTALTSSPFIVLPWVGNLI, GMFAIMAPVCVAPIILVLMYV, LVGLFLLALSFSLLLVPFSIY, IIAMFVCGGVILGMFLAWEIL, and VWYNRTFLLAVTIDIFYFMGG. A glycan (N-linked (GlcNAc...) asparagine) is linked at asparagine 415. 2 helical membrane passes run 424–444 and 451–471; these read VVNALATCALSVFGLAAGFYL and KFLQIGGLVIRIVAMGLYLYG. Asparagine 475 is a glycosylation site (N-linked (GlcNAc...) asparagine). The next 3 helical transmembrane spans lie at 478 to 498, 528 to 548, and 590 to 610; these read TMVVAWSQILNSLGGACSVVG, AIGSAIAAGIWTGTLPDYLAA, and PIFIVALVLAFIPLFAGLLMP.

It belongs to the major facilitator superfamily.

The protein resides in the membrane. Siderophore transporter; part of the gene cluster that mediates the biosynthesis of siderophore ferrichrome A which is contributing to organismal virulence. The sequence is that of Siderophore transporter fer7 from Mycosarcoma maydis (Corn smut fungus).